The following is a 570-amino-acid chain: MRFCNSKLTSIDNRCDVAIISKDEERFEVKLVESEIARELNRLGALSPRSMQKNILVPFTTQTVKYLLGLEKVSDSTDEMGWFGIEKSLEEIAGFGQHCFPKILEMKNTICDHILSTLSDVNCFLLHKKFREFDCQNHAHKTLEYILYNLARMVVVDKRVDVEFYRLPVEEVKHLLSSEEVNVEQETQIIEVINQWIAADFENRDKFRPMLMSTVRFLALDQQIAKSLSQFHPSLKPARRTRDVLIIIGGWLHRQACDRIEWFDPENNCWKVSQQKLPTTLAYHGSAIVDGILYLFGGSTGQRTRCETWKLSTETWQWDRCNNMMEPRNYISNSSVVYDGRIYVFGGQNFREITRTAVRSRTGEVFDPKTNKWTETASLSDMRSDCAAEVFENQIYVSGGFNGDMILASVEVYNPIGNVFSRTVDLPYPITGHCLLNHGNQLLIVGGFDGAERQNKIWMWHRTGEWQQRPEKLIYGRSTSAACSYKGWLFSVAGYTEKVEATCEILLPEPNASRFSFIPDVPRAKSALNVLVAPNWRNFLERRGTINEQSMEMDDDYEDDAGASYMSINN.

Kelch repeat units lie at residues V244 to G291, L293 to Y338, R341 to N393, I395 to N440, L442 to G487, and L489 to N535.

As to expression, testis, in both spermatogonial cells and spermatocytes.

Its subcellular location is the cytoplasm. The protein localises to the cytoskeleton. In terms of biological role, may play a role in the spermatocyte cytoskeleton, possibly interacting with actin. The sequence is that of Spermatocyte protein spe-26 (spe-26) from Caenorhabditis elegans.